Consider the following 237-residue polypeptide: Ribitol-5-phosphate cytidylyltransferase (237 aa).

CTP-binding positions include 7–10 (LAGG) and 80–86 (GEDRNET).

The protein belongs to the IspD/TarI cytidylyltransferase family. TarI subfamily.

The catalysed reaction is D-ribitol 5-phosphate + CTP + H(+) = CDP-L-ribitol + diphosphate. The protein operates within cell wall biogenesis; poly(ribitol phosphate) teichoic acid biosynthesis. In terms of biological role, catalyzes the transfer of the cytidylyl group of CTP to D-ribitol 5-phosphate. The polypeptide is Ribitol-5-phosphate cytidylyltransferase (Listeria innocua serovar 6a (strain ATCC BAA-680 / CLIP 11262)).